We begin with the raw amino-acid sequence, 441 residues long: Mitochondrial distribution and morphology protein 12 (441 aa).

One can recognise an SMP-LTD domain in the interval 1-441; sequence MSIDIDWERA…VYPSFWTFLV (441 aa). Residues 180–289 form a disordered region; the sequence is TPLRAVTRGN…SGTPPRRMRE (110 aa). 2 stretches are compositionally biased toward polar residues: residues 226–245 and 253–263; these read SRPS…SVST and SSQTVLANNPG.

Belongs to the MDM12 family. As to quaternary structure, component of the ER-mitochondria encounter structure (ERMES) or MDM complex, composed of MMM1, MDM10, MDM12 and MDM34. An MMM1 homodimer associates with one molecule of MDM12 on each side in a pairwise head-to-tail manner, and the SMP-LTD domains of MMM1 and MDM12 generate a continuous hydrophobic tunnel for phospholipid trafficking.

The protein localises to the mitochondrion outer membrane. It is found in the endoplasmic reticulum membrane. Functionally, component of the ERMES/MDM complex, which serves as a molecular tether to connect the endoplasmic reticulum (ER) and mitochondria. Components of this complex are involved in the control of mitochondrial shape and protein biogenesis, and function in nonvesicular lipid trafficking between the ER and mitochondria. MDM12 is required for the interaction of the ER-resident membrane protein MMM1 and the outer mitochondrial membrane-resident beta-barrel protein MDM10. The MDM12-MMM1 subcomplex functions in the major beta-barrel assembly pathway that is responsible for biogenesis of all mitochondrial outer membrane beta-barrel proteins, and acts in a late step after the SAM complex. The MDM10-MDM12-MMM1 subcomplex further acts in the TOM40-specific pathway after the action of the MDM12-MMM1 complex. Essential for establishing and maintaining the structure of mitochondria and maintenance of mtDNA nucleoids. The chain is Mitochondrial distribution and morphology protein 12 from Paracoccidioides brasiliensis (strain Pb18).